Consider the following 372-residue polypeptide: Glutamate 5-kinase (372 aa).

K14 contributes to the ATP binding site. The substrate site is built by S54, D141, and N153. Residues 173–174 (TD) and 215–221 (TGGMATK) each bind ATP. A PUA domain is found at 280 to 358 (RGQVVLDTGA…DNIEEILGYD (79 aa)).

Belongs to the glutamate 5-kinase family.

The protein resides in the cytoplasm. The enzyme catalyses L-glutamate + ATP = L-glutamyl 5-phosphate + ADP. Its pathway is amino-acid biosynthesis; L-proline biosynthesis; L-glutamate 5-semialdehyde from L-glutamate: step 1/2. In terms of biological role, catalyzes the transfer of a phosphate group to glutamate to form L-glutamate 5-phosphate. The protein is Glutamate 5-kinase of Shewanella halifaxensis (strain HAW-EB4).